A 473-amino-acid polypeptide reads, in one-letter code: MNENKASNRMWGGRFASGPDAIMEAINASIGFDRKLYAQDIRGSLAHAAMLAETGIISTEDEKKIAHGLNTILSEIEAGKFEFSTRLEDIHMNVEARLAELIGPAAGRLHTARSRNDQVAVDFRLWVKEELLRIDVALGGLIEAFLVRAEEHAATVMPGFTHLQTAQPVTFGHHLMAYVEMFGRDRTRVRDAVERLDESPLGAAALAGTSFPIDRHMTAKTLGFREPTRNSIDTVSDRDFALEFLSVSAICATHLSRLAEEIVIWSTSQFGFIRLSDAFSTGSSIMPQKKNPDAAELVRAKTGRINGHLIGLLTVMKGLPLAYSKDMQEDKEAVFDAAETLDLMLAAMTGMIGDMEVNAAAMKKAAGSGFSTATDLADWLVREAGLPFREAHHVTGRAVALAEERKCGLEKLALSDLQAIHPAITENIFSVLSVGNSVKSRTSFGGTAPAEVRRQVRYWKKRLKRDASLEKKG.

This sequence belongs to the lyase 1 family. Argininosuccinate lyase subfamily.

It localises to the cytoplasm. It catalyses the reaction 2-(N(omega)-L-arginino)succinate = fumarate + L-arginine. Its pathway is amino-acid biosynthesis; L-arginine biosynthesis; L-arginine from L-ornithine and carbamoyl phosphate: step 3/3. In Chelativorans sp. (strain BNC1), this protein is Argininosuccinate lyase.